We begin with the raw amino-acid sequence, 433 residues long: Homoserine dehydrogenase (433 aa).

Residues Thr13 and Val14 each contribute to the NADPH site. 2 residues coordinate NAD(+): Val14 and Val33. Val14 contributes to the NADP(+) binding site. NADPH-binding residues include Lys45 and Lys105. NADP(+) is bound by residues Lys45 and Lys105. Na(+) contacts are provided by Glu129, Val132, Gly134, and Ile136. NADP(+) is bound by residues Gly187 and Glu190. 2 residues coordinate L-homoserine: Glu190 and Asp201. The active-site Proton donor is the Lys205. Gly302 lines the NADPH pocket. Gly302 contributes to the NAD(+) binding site. NADP(+) is bound at residue Gly302. In terms of domain architecture, ACT spans 350–426 (FLRIHVKDEV…VVQEVKSTYR (77 aa)).

Belongs to the homoserine dehydrogenase family. Homotetramer. A metal cation serves as cofactor.

The protein localises to the cytoplasm. It is found in the secreted. The catalysed reaction is L-homoserine + NADP(+) = L-aspartate 4-semialdehyde + NADPH + H(+). The protein operates within amino-acid biosynthesis; L-methionine biosynthesis via de novo pathway; L-homoserine from L-aspartate: step 3/3. It participates in amino-acid biosynthesis; L-threonine biosynthesis; L-threonine from L-aspartate: step 3/5. Its activity is regulated as follows. Feedback inhibition by threonine. Activated by sodium ions. In terms of biological role, catalyzes the conversion of L-aspartate-beta-semialdehyde (L-Asa) to L-homoserine (L-Hse), the third step in the biosynthesis of threonine and methionine from aspartate. Utilizes NADPH but not NADH as coenzyme. The sequence is that of Homoserine dehydrogenase (hom) from Bacillus subtilis (strain 168).